Reading from the N-terminus, the 301-residue chain is Cytochrome c biogenesis protein CcsA (301 aa).

The next 8 helical transmembrane spans lie at 13-33 (NNIT…GLIF), 39-59 (VFYI…IILG), 73-93 (LYES…YLEY), 97-117 (LYLI…FSTL), 146-166 (MLSY…LVLI), 209-229 (TIGF…VWAN), 236-256 (WSWD…AAYL), and 270-290 (AYLA…VNFL).

The protein belongs to the CcmF/CycK/Ccl1/NrfE/CcsA family. As to quaternary structure, may interact with Ccs1.

It is found in the plastid. It localises to the chloroplast thylakoid membrane. Its function is as follows. Required during biogenesis of c-type cytochromes (cytochrome c6 and cytochrome f) at the step of heme attachment. The polypeptide is Cytochrome c biogenesis protein CcsA (Guillardia theta (Cryptophyte)).